We begin with the raw amino-acid sequence, 1141 residues long: Eukaryotic translation initiation factor 3 subunit A (1141 aa).

The PCI domain occupies 319-501 (LQRMAAHVLL…NSIYFGTDLT (183 aa)). Basic and acidic residues-rich tracts occupy residues 588-623 (QNNAREEEEARRQEEESRKAKLAEQKRLEQEQEERE) and 829-899 (AAEE…RGGD). Disordered stretches follow at residues 588–631 (QNNA…QNEI) and 829–1141 (AAEE…VKRR). Ser908 carries the post-translational modification Phosphoserine. Composition is skewed to basic and acidic residues over residues 920–976 (ERND…EPDT), 990–1051 (SRDD…EPQR), 1059–1087 (DAPRHADRENRRPAGERRDRDVRETRGDQ), and 1110–1131 (TREEKPAAKRDQAQEKENKAGD).

It belongs to the eIF-3 subunit A family. As to quaternary structure, component of the eukaryotic translation initiation factor 3 (eIF-3) complex. The eIF-3 complex interacts with pix.

It is found in the cytoplasm. Its function is as follows. RNA-binding component of the eukaryotic translation initiation factor 3 (eIF-3) complex, which is involved in protein synthesis of a specialized repertoire of mRNAs and, together with other initiation factors, stimulates binding of mRNA and methionyl-tRNAi to the 40S ribosome. The eIF-3 complex specifically targets and initiates translation of a subset of mRNAs involved in cell proliferation. The chain is Eukaryotic translation initiation factor 3 subunit A from Drosophila sechellia (Fruit fly).